Here is a 260-residue protein sequence, read N- to C-terminus: Indole-3-glycerol phosphate synthase (260 aa).

This sequence belongs to the TrpC family.

The catalysed reaction is 1-(2-carboxyphenylamino)-1-deoxy-D-ribulose 5-phosphate + H(+) = (1S,2R)-1-C-(indol-3-yl)glycerol 3-phosphate + CO2 + H2O. The protein operates within amino-acid biosynthesis; L-tryptophan biosynthesis; L-tryptophan from chorismate: step 4/5. The sequence is that of Indole-3-glycerol phosphate synthase from Acetivibrio thermocellus (strain ATCC 27405 / DSM 1237 / JCM 9322 / NBRC 103400 / NCIMB 10682 / NRRL B-4536 / VPI 7372) (Clostridium thermocellum).